Consider the following 458-residue polypeptide: Argininosuccinate lyase (458 aa).

This sequence belongs to the lyase 1 family. Argininosuccinate lyase subfamily.

It localises to the cytoplasm. The catalysed reaction is 2-(N(omega)-L-arginino)succinate = fumarate + L-arginine. The protein operates within amino-acid biosynthesis; L-arginine biosynthesis; L-arginine from L-ornithine and carbamoyl phosphate: step 3/3. This Salmonella heidelberg (strain SL476) protein is Argininosuccinate lyase.